The sequence spans 456 residues: RuvB-like helicase 1 (456 aa).

ATP is bound at residue 70-77; the sequence is GPPGTGKT.

The protein belongs to the RuvB family. In terms of assembly, forms homohexameric rings. May form a dodecamer with rept made of two stacked hexameric rings. Component of the chromatin remodeling Ino80 complex. Interacts with Myc and rept. Higher expression occurs in primordia of mesoderm, anterior and posterior midgut and cephalic furrow early in gastrulation, as well as in endoderm and mesoderm lineages during germ band extension. Later in development expression is only maintained in endoderm cells. Expressed in thoracic and abdominal segment neural precursors of all embryonic chordotonal organs.

Its subcellular location is the nucleus. The enzyme catalyses ATP + H2O = ADP + phosphate + H(+). In terms of biological role, acts as a transcriptional coactivator in Wg signaling caused by altered arm signaling. Pont and rept interfere antagonistically with nuclear arm signaling function, and are required to enhance or reduce arm activity, respectively. Also an essential cofactor for the normal function of Myc; required for cellular proliferation and growth. Functionally, proposed core component of the chromatin remodeling Ino80 complex which is involved in transcriptional regulation, DNA replication and probably DNA repair. This chain is RuvB-like helicase 1, found in Drosophila melanogaster (Fruit fly).